The primary structure comprises 126 residues: Aspartate 1-decarboxylase (126 aa).

Ser-25 acts as the Schiff-base intermediate with substrate; via pyruvic acid in catalysis. Ser-25 carries the post-translational modification Pyruvic acid (Ser). Residue Thr-57 coordinates substrate. Tyr-58 acts as the Proton donor in catalysis. 73 to 75 (GAA) is a substrate binding site.

It belongs to the PanD family. Heterooctamer of four alpha and four beta subunits. It depends on pyruvate as a cofactor. In terms of processing, is synthesized initially as an inactive proenzyme, which is activated by self-cleavage at a specific serine bond to produce a beta-subunit with a hydroxyl group at its C-terminus and an alpha-subunit with a pyruvoyl group at its N-terminus.

The protein resides in the cytoplasm. It catalyses the reaction L-aspartate + H(+) = beta-alanine + CO2. Its pathway is cofactor biosynthesis; (R)-pantothenate biosynthesis; beta-alanine from L-aspartate: step 1/1. Functionally, catalyzes the pyruvoyl-dependent decarboxylation of aspartate to produce beta-alanine. The sequence is that of Aspartate 1-decarboxylase from Photorhabdus laumondii subsp. laumondii (strain DSM 15139 / CIP 105565 / TT01) (Photorhabdus luminescens subsp. laumondii).